The following is an 87-amino-acid chain: HssA/B-like protein 56 (87 aa).

Belongs to the hssA/B family.

This Dictyostelium discoideum (Social amoeba) protein is HssA/B-like protein 56 (hssl56).